The following is a 384-amino-acid chain: Putative aminohydrolase MTH_994 (384 aa).

Zn(2+) is bound by residues histidine 60, histidine 62, histidine 207, and aspartate 291.

It belongs to the metallo-dependent hydrolases superfamily. ATZ/TRZ family.

In Methanothermobacter thermautotrophicus (strain ATCC 29096 / DSM 1053 / JCM 10044 / NBRC 100330 / Delta H) (Methanobacterium thermoautotrophicum), this protein is Putative aminohydrolase MTH_994.